The primary structure comprises 198 residues: Inosine triphosphate pyrophosphatase (198 aa).

The residue at position 2 (alanine 2) is an N-acetylalanine. ITP is bound at residue 14-19 (TGNAKK). Residue glutamate 44 participates in Mg(2+) binding. ITP is bound by residues lysine 56, 72 to 73 (DT), and lysine 89. A Phosphoserine modification is found at serine 146. ITP is bound by residues 149–152 (FGWD), lysine 172, and 177–178 (HR).

It belongs to the HAM1 NTPase family. In terms of assembly, homodimer. Mg(2+) is required as a cofactor. Mn(2+) serves as cofactor.

Its subcellular location is the cytoplasm. The catalysed reaction is ITP + H2O = IMP + diphosphate + H(+). The enzyme catalyses dITP + H2O = dIMP + diphosphate + H(+). It carries out the reaction XTP + H2O = XMP + diphosphate + H(+). It catalyses the reaction N(6)-hydroxy-dATP + H2O = N(6)-hydroxy-dAMP + diphosphate + H(+). Its function is as follows. Pyrophosphatase that hydrolyzes the non-canonical purine nucleotides inosine triphosphate (ITP), deoxyinosine triphosphate (dITP) as well as 2'-deoxy-N-6-hydroxylaminopurine triphosphate (dHAPTP) and xanthosine 5'-triphosphate (XTP) to their respective monophosphate derivatives. The enzyme does not distinguish between the deoxy- and ribose forms. Probably excludes non-canonical purines from RNA and DNA precursor pools, thus preventing their incorporation into RNA and DNA and avoiding chromosomal lesions. The polypeptide is Inosine triphosphate pyrophosphatase (Itpa) (Mus musculus (Mouse)).